Here is a 240-residue protein sequence, read N- to C-terminus: uncharacterized protein (240 aa).

A run of 2 helical transmembrane segments spans residues 16-36 (AVFFLYAALAIIGFAIGYFIP) and 67-87 (FITALLGMCAGIWFAHSVIAM).

It is found in the cell membrane. This is an uncharacterized protein from Bacillus subtilis (strain 168).